Reading from the N-terminus, the 108-residue chain is Large ribosomal subunit protein uL24 (108 aa).

This sequence belongs to the universal ribosomal protein uL24 family. As to quaternary structure, part of the 50S ribosomal subunit.

One of two assembly initiator proteins, it binds directly to the 5'-end of the 23S rRNA, where it nucleates assembly of the 50S subunit. Functionally, one of the proteins that surrounds the polypeptide exit tunnel on the outside of the subunit. The sequence is that of Large ribosomal subunit protein uL24 from Mycoplasmopsis synoviae (strain 53) (Mycoplasma synoviae).